Here is an 849-residue protein sequence, read N- to C-terminus: Protein translocase subunit SecA (849 aa).

ATP is bound by residues Q85, 103–107, and D493; that span reads GEGKT. Zn(2+)-binding residues include C832, C834, C843, and H844.

It belongs to the SecA family. In terms of assembly, monomer and homodimer. Part of the essential Sec protein translocation apparatus which comprises SecA, SecYEG and auxiliary proteins SecDF. Other proteins may also be involved. Zn(2+) is required as a cofactor.

The protein localises to the cell membrane. Its subcellular location is the cytoplasm. The catalysed reaction is ATP + H2O + cellular proteinSide 1 = ADP + phosphate + cellular proteinSide 2.. Part of the Sec protein translocase complex. Interacts with the SecYEG preprotein conducting channel. Has a central role in coupling the hydrolysis of ATP to the transfer of proteins into and across the cell membrane, serving as an ATP-driven molecular motor driving the stepwise translocation of polypeptide chains across the membrane. The protein is Protein translocase subunit SecA of Streptococcus thermophilus (strain ATCC BAA-250 / LMG 18311).